The sequence spans 86 residues: Putative protein adenylyltransferase MJ1215 (86 aa).

Residues Gly35–Asp49 carry the GSX(10)DXD motif motif. Mg(2+)-binding residues include Asp47, Asp49, and Asp79.

It belongs to the MntA antitoxin family. Probably forms a complex with cognate toxin MJ1216. The cofactor is Mg(2+).

The catalysed reaction is L-tyrosyl-[protein] + ATP = O-(5'-adenylyl)-L-tyrosyl-[protein] + diphosphate. It carries out the reaction O-(5'-adenylyl)-L-tyrosyl-[protein] + ATP = O-[5'-(adenylyl-(5'-&gt;3')-adenylyl)]-L-tyrosyl-[protein] + diphosphate. Probable antitoxin component of a putative type VII toxin-antitoxin (TA) system. Neutralizes cognate toxic MJ1216 by di-AMPylation. The protein is Putative protein adenylyltransferase MJ1215 of Methanocaldococcus jannaschii (strain ATCC 43067 / DSM 2661 / JAL-1 / JCM 10045 / NBRC 100440) (Methanococcus jannaschii).